The chain runs to 447 residues: Tubulin beta chain (447 aa).

The GTP site is built by glutamine 11, glutamate 69, serine 138, glycine 142, threonine 143, glycine 144, asparagine 204, and asparagine 226. Glutamate 69 contributes to the Mg(2+) binding site. A disordered region spans residues 424–447 (QYQEASVSEGEEEYDEEAPLEGEE). Positions 432–447 (EGEEEYDEEAPLEGEE) are enriched in acidic residues.

Belongs to the tubulin family. As to quaternary structure, dimer of alpha and beta chains. A typical microtubule is a hollow water-filled tube with an outer diameter of 25 nm and an inner diameter of 15 nM. Alpha-beta heterodimers associate head-to-tail to form protofilaments running lengthwise along the microtubule wall with the beta-tubulin subunit facing the microtubule plus end conferring a structural polarity. Microtubules usually have 13 protofilaments but different protofilament numbers can be found in some organisms and specialized cells. Mg(2+) is required as a cofactor.

The protein localises to the cytoplasm. Its subcellular location is the cytoskeleton. Its function is as follows. Tubulin is the major constituent of microtubules, a cylinder consisting of laterally associated linear protofilaments composed of alpha- and beta-tubulin heterodimers. Microtubules grow by the addition of GTP-tubulin dimers to the microtubule end, where a stabilizing cap forms. Below the cap, tubulin dimers are in GDP-bound state, owing to GTPase activity of alpha-tubulin. The sequence is that of Tubulin beta chain (TUB1) from Cercospora beticola (Sugarbeet leaf spot fungus).